The sequence spans 106 residues: COX assembly mitochondrial protein homolog (106 aa).

Ala-2 is modified (N-acetylalanine). The 44-residue stretch at 28–71 (RERCSEQVEDFTRCCKDSGILMVLKCRKENSALKDCLTAYYNDP) folds into the CHCH domain. 2 consecutive short sequence motifs (cx9C motif) follow at residues 31-41 (CSEQVEDFTRC) and 53-63 (CRKENSALKDC). 2 disulfide bridges follow: Cys-31–Cys-63 and Cys-41–Cys-53.

This sequence belongs to the CMC family. In terms of assembly, component of the MITRAC (mitochondrial translation regulation assembly intermediate of cytochrome c oxidase complex) complex, the core components of this complex being COA3/MITRAC12 and COX14.

The protein resides in the mitochondrion. Functionally, component of the MITRAC (mitochondrial translation regulation assembly intermediate of cytochrome c oxidase complex) complex, that regulates cytochrome c oxidase assembly. The chain is COX assembly mitochondrial protein homolog (Cmc1) from Mus musculus (Mouse).